We begin with the raw amino-acid sequence, 193 residues long: Non-canonical purine NTP pyrophosphatase homolog (193 aa).

The protein belongs to the HAM1 NTPase family.

This chain is Non-canonical purine NTP pyrophosphatase homolog, found in Halalkalibacterium halodurans (strain ATCC BAA-125 / DSM 18197 / FERM 7344 / JCM 9153 / C-125) (Bacillus halodurans).